A 688-amino-acid polypeptide reads, in one-letter code: Phosphatidylinositol 4-phosphate 5-kinase type-1 gamma (688 aa).

A disordered region spans residues 48-71 (GQPGPGHGKKLGHRGVDASGETTY). The PIPK domain maps to 75–443 (TSSTLKGAIQ…RFFKFMSSTV (369 aa)). 2 positions are modified to N6-acetyllysine: Lys-265 and Lys-268. Arg-459 carries the post-translational modification Asymmetric dimethylarginine; alternate. Arg-459 bears the Omega-N-methylarginine; alternate mark. Over residues 525–534 (TTLSSTSLSI) the composition is skewed to low complexity. Disordered stretches follow at residues 525 to 565 (TTLS…QEEL) and 592 to 629 (GAGVEVPPSGASAAATVEVDAASQASEPASQASDEEDA). The residue at position 554 (Ser-554) is a Phosphoserine. Low complexity predominate over residues 602–623 (ASAAATVEVDAASQASEPASQA). A Phosphotyrosine; by EGFR modification is found at Tyr-635. Tyr-671 carries the post-translational modification Phosphotyrosine; by CSK. The residue at position 672 (Ser-672) is a Phosphoserine; by CDK5, MAPK1 and CDK1. A phosphoserine mark is found at Ser-682 and Ser-686. The residue at position 688 (Thr-688) is a Phosphothreonine.

As to quaternary structure, interacts with TLN1. Interacts with TLN2; interaction stimulates 1-phosphatidylinositol-4-phosphate 5-kinase activity. May compete with beta-integrins for the same binding site on TLN1 and TLN2. Interacts with ARF6; interaction stimulates 1-phosphatidylinositol-4-phosphate 5-kinase activity. Interacts with AP2B1. Interacts with AP2M1; phosphorylation of PIP5K1C by CSK disrupts the interaction; clathrin competes with PIP5K1C. Interacts with CDH1. Interacts with CSK. Interacts with PLCG1; interaction is abolished upon EGF stimulation. Interacts with LAPTM4B; promotes SNX5 association with LAPTM4B; kinase activity of PIP5K1C is required; interaction is regulated by phosphatidylinositol 4,5-bisphosphate generated by PIP5K1C. Phosphorylation on Ser-672 negatively regulates binding to TLN2 and is strongly stimulated in mitosis. Phosphorylation on Tyr-671 is necessary for targeting to focal adhesions. Phosphorylation on Ser-672 and Tyr-671 are mutually exclusive. Phosphorylated by SYK and CSK. Tyrosine phosphorylation is enhanced by PTK2 signaling. Phosphorylated at Tyr-635 upon EGF stimulation. Some studies suggest that phosphorylation on Tyr-671 enhances binding to tailins (TLN1 and TLN2); others that phosphorylation at Tyr-671 does not directly enhance binding to tailins (TLN1 and TLN2) but may act indirectly by inhibiting phosphorylation at Ser-672. Post-translationally, acetylation at Lys-265 and Lys-268 seems to decrease lipid kinase activity. Deacetylation of these sites by SIRT1 positively regulates the exocytosis of TSH-containing granules from pituitary cells.

Its subcellular location is the cell membrane. It localises to the endomembrane system. The protein resides in the cytoplasm. The protein localises to the cell junction. It is found in the focal adhesion. Its subcellular location is the adherens junction. It localises to the cell projection. The protein resides in the ruffle membrane. The protein localises to the phagocytic cup. It is found in the uropodium. It carries out the reaction a 1,2-diacyl-sn-glycero-3-phospho-(1D-myo-inositol 4-phosphate) + ATP = a 1,2-diacyl-sn-glycero-3-phospho-(1D-myo-inositol-4,5-bisphosphate) + ADP + H(+). The catalysed reaction is 1-octadecanoyl-2-(5Z,8Z,11Z,14Z)-eicosatetraenoyl-sn-glycero-3-phospho-1D-myo-inositol 4-phosphate + ATP = 1-octadecanoyl-2-(5Z,8Z,11Z,14Z)-eicosatetraenoyl-sn-glycero-3-phospho-1D-myo-inositol 4,5-bisphosphate + ADP + H(+). It catalyses the reaction 1-octadecanoyl-2-(9Z)-octadecenoyl-sn-glycero-3-phospho-1D-myo-inositol 4-phosphate + ATP = 1-octadecanoyl-2-(9Z)-octadecenoyl-sn-glycero-3-phospho-1D-myo-inositol 4,5-bisphosphate + ADP + H(+). The enzyme catalyses 1-octadecanoyl-2-(9Z)-octadecenoyl-sn-glycero-3-phospho-1D-myo-inositol + ATP = 1-octadecanoyl-2-(9Z)-octadecenoyl-sn-glycero-3-phospho-1D-myo-inositol 5-phosphate + ADP + H(+). It carries out the reaction 1-octadecanoyl-2-(9Z,12Z)-octadecadienoyl-sn-glycero-3-phospho-1D-myo-inositol + ATP = 1-octadecanoyl-2-(9Z,12Z)-octadecadienoyl-sn-glycero-3-phospho-1D-myo-inositol 5-phosphate + ADP + H(+). The catalysed reaction is 1-octadecanoyl-2-(5Z,8Z,11Z,14Z-eicosatetraenoyl)-sn-glycero-3-phospho-(1D-myo-inositol) + ATP = 1-octadecanoyl-2-(5Z,8Z,11Z,14Z)-eicosatetraenoyl-sn-glycero-3-phospho-1D-myo-inositol 5-phosphate + ADP + H(+). It catalyses the reaction 1,2-di-(9Z,12Z)-octadecadienoyl-sn-glycero-3-phospho-1D-myo-inositol + ATP = 1,2-di(9Z,12Z)-octadecadienoyl-sn-glycero-3-phospho-1D-myo-inositol 5-phosphate + ADP + H(+). In terms of biological role, catalyzes the phosphorylation of phosphatidylinositol 4-phosphate (PtdIns(4)P/PI4P) to form phosphatidylinositol 4,5-bisphosphate (PtdIns(4,5)P2/PIP2), a lipid second messenger that regulates several cellular processes such as signal transduction, vesicle trafficking, actin cytoskeleton dynamics, cell adhesion, and cell motility. PtdIns(4,5)P2 can directly act as a second messenger or can be utilized as a precursor to generate other second messengers: inositol 1,4,5-trisphosphate (IP3), diacylglycerol (DAG) or phosphatidylinositol-3,4,5-trisphosphate (PtdIns(3,4,5)P3/PIP3). PIP5K1A-mediated phosphorylation of PtdIns(4)P is the predominant pathway for PtdIns(4,5)P2 synthesis. Together with PIP5K1A, is required for phagocytosis, both enzymes regulating different types of actin remodeling at sequential steps. Promotes particle attachment by generating the pool of PtdIns(4,5)P2 that induces controlled actin depolymerization to facilitate Fc-gamma-R clustering. Mediates RAC1-dependent reorganization of actin filaments. Required for synaptic vesicle transport. Controls the plasma membrane pool of PtdIns(4,5)P2 implicated in synaptic vesicle endocytosis and exocytosis. Plays a role in endocytosis mediated by clathrin and AP-2 (adaptor protein complex 2). Required for clathrin-coated pits assembly at the synapse. Participates in cell junction assembly. Modulates adherens junctions formation by facilitating CDH1/cadherin trafficking. Required for focal adhesion dynamics. Modulates the targeting of talins (TLN1 and TLN2) to the plasma membrane and their efficient assembly into focal adhesions. Regulates the interaction between talins (TLN1 and TLN2) and beta-integrins. Required for uropodium formation and retraction of the cell rear during directed migration. Has a role in growth factor-stimulated directional cell migration and adhesion. Required for talin assembly into nascent adhesions forming at the leading edge toward the direction of the growth factor. Negative regulator of T-cell activation and adhesion. Negatively regulates integrin alpha-L/beta-2 (LFA-1) polarization and adhesion induced by T-cell receptor. Together with PIP5K1A has a role during embryogenesis and together with PIP5K1B may have a role immediately after birth. This chain is Phosphatidylinositol 4-phosphate 5-kinase type-1 gamma, found in Rattus norvegicus (Rat).